A 546-amino-acid chain; its full sequence is MAAKQVLFGDDARVRIVRGVNVLANAVKTTLGPKGRNVVLERSFGAPTVTKDGVSVAKEIELKDKFENIGAQLVKDVASKTSDNAGDGTTTATVLAQAIVQEGLKYVAAGFNPIDLKRGIDKAVSAAVAELAKQSKPVTTSKEIAQVGSISANSDESIGKIIADAMDKVGKEGVITVEDGKSLDNELDVVEGMQFDRGYLSPYFINNPDKQVAALDDPYVLIFDKKISNIRDLLPVLEQVAKSSRPLLIIAEDVEGEALATLVVNNIRGILKTTAVKAPGFGDRRKAMLEDIAILTGGVVISEETGMSLEKATLQELGQAKRIEVGKENTTIIDGAGDSKSIEARVKQIRVQIEEATSDYDREKLQERVAKLAGGVAVIRVGAATEVEMKEKKARVEDALHATRAAVEEGVVAGGGVALLRAKQAIADLKGDTADQNAGIKLILRAVEEPLRTIVTNAGEEASVVVNNVLNGKGNYGYNAATGEYTDLVEQGVLDPTKVTRTALQNAASVASLLLTAEAAVVELSEDKPAAPPMPGGMGGMGGMDF.

ATP contacts are provided by residues 30 to 33, Lys51, 87 to 91, Gly415, 479 to 481, and Asp495; these read TLGP, DGTTT, and NAA. A disordered region spans residues 527-546; sequence DKPAAPPMPGGMGGMGGMDF. Over residues 536–546 the composition is skewed to gly residues; sequence GGMGGMGGMDF.

The protein belongs to the chaperonin (HSP60) family. Forms a cylinder of 14 subunits composed of two heptameric rings stacked back-to-back. Interacts with the co-chaperonin GroES.

It is found in the cytoplasm. It carries out the reaction ATP + H2O + a folded polypeptide = ADP + phosphate + an unfolded polypeptide.. In terms of biological role, together with its co-chaperonin GroES, plays an essential role in assisting protein folding. The GroEL-GroES system forms a nano-cage that allows encapsulation of the non-native substrate proteins and provides a physical environment optimized to promote and accelerate protein folding. The polypeptide is Chaperonin GroEL (Bordetella petrii (strain ATCC BAA-461 / DSM 12804 / CCUG 43448)).